The primary structure comprises 424 residues: UDP-sugar transporter protein SLC35A5 (424 aa).

Over 1–8 (MEKQCCSH) the chain is Cytoplasmic. The helical transmembrane segment at 9-29 (PVICSLSTMYTFLLGAIFIAL) threads the bilayer. At 30-53 (SSSRILLVKYSANEENKYDYLPTT) the chain is on the lumenal side. A helical membrane pass occupies residues 54 to 74 (ANVCSELVKLVFCVLVSFCVI). Residues 75–93 (KKDHQSRNLKYASWKEFSN) lie on the Cytoplasmic side of the membrane. A helical membrane pass occupies residues 94–116 (FMKWSIPAFLYFLDNLIVFYVLS). The Lumenal portion of the chain corresponds to 117–119 (YLQ). The chain crosses the membrane as a helical span at residues 120–142 (PAMAVIFSNFSIITTALLFRIVL). Over 143-147 (KRRLN) the chain is Cytoplasmic. The chain crosses the membrane as a helical span at residues 148-168 (WIQWASLLILFLSIVALTAGT). Residues 169 to 228 (KTLQHNLAGHGFHHDAFFSPSNSCLLFRSECPRKDNCTAKEWTFPEAKWNTTARVFSHIR) are Lumenal-facing. Asparagine 204 carries N-linked (GlcNAc...) asparagine glycosylation. A helical transmembrane segment spans residues 229-249 (LGMGHVLIIVQCFISSMANIY). Over 250-263 (NEKILKEGNQLAES) the chain is Cytoplasmic. A helical transmembrane segment spans residues 264-284 (IFIQNSKLYFFGILFNGLTLG). The Lumenal portion of the chain corresponds to 285–303 (LQRSNRDQIKNCGFFYGHN). The helical transmembrane segment at 304-324 (AFSVALIFVTAFQGLSVAFIL) threads the bilayer. Residues 325-330 (KFLDNM) lie on the Cytoplasmic side of the membrane. Residues 331 to 351 (FHVLMAQVTTVIITTVSVLVF) form a helical membrane-spanning segment. Topologically, residues 352–354 (DFR) are lumenal. A helical membrane pass occupies residues 355–375 (PSLEFFLEAPSVLLSIFIYNA). Over 376–424 (SKPQGPEYAPRQERIRDLSGNLWERSSGDGEELERLTKPKSDESDEDTF) the chain is Cytoplasmic. A phosphoserine mark is found at serine 394, serine 416, and serine 419. The interval 395–424 (GNLWERSSGDGEELERLTKPKSDESDEDTF) is disordered. The segment covering 408-417 (LERLTKPKSD) has biased composition (basic and acidic residues).

It belongs to the nucleotide-sugar transporter family. SLC35A subfamily. In terms of assembly, probably forms homooligomers and heterooligomers with SLC35A1, SLC35A2, SLC35A3 and SLC35A4.

The protein resides in the golgi apparatus membrane. It carries out the reaction UMP(out) + UDP-alpha-D-glucuronate(in) = UMP(in) + UDP-alpha-D-glucuronate(out). The catalysed reaction is UMP(out) + UDP-N-acetyl-alpha-D-glucosamine(in) = UMP(in) + UDP-N-acetyl-alpha-D-glucosamine(out). It catalyses the reaction UDP-N-acetyl-alpha-D-galactosamine(in) + UMP(out) = UDP-N-acetyl-alpha-D-galactosamine(out) + UMP(in). In terms of biological role, probable UDP-sugar:UMP transmembrane antiporter involved in UDP-alpha-D-glucuronate/UDP-GlcA, UDP-GlcNAc/UDP-N-acetyl-alpha-D-glucosamine and UDP-N-acetyl-alpha-D-galactosamine/UDP-GalNAc transport from the cytosol to the lumen of the Golgi. In Pongo abelii (Sumatran orangutan), this protein is UDP-sugar transporter protein SLC35A5.